Consider the following 307-residue polypeptide: Holliday junction branch migration complex subunit RuvB (307 aa).

Positions 1–167 (MKLQIKPPNN…FGMILNIDYY (167 aa)) are large ATPase domain (RuvB-L). ATP contacts are provided by residues isoleucine 5, glycine 48, lysine 51, threonine 52, threonine 53, 114-116 (DDF), arginine 157, tyrosine 167, and arginine 204. Threonine 52 is a Mg(2+) binding site. Residues 168–233 (SNQEIERIVS…DLAALFKSLM (66 aa)) form a small ATPAse domain (RuvB-S) region. The segment at 236-307 (KNGLQSIDVQ…RTGRNYLTSC (72 aa)) is head domain (RuvB-H). DNA contacts are provided by lysine 289 and arginine 294.

Belongs to the RuvB family. As to quaternary structure, homohexamer. Forms an RuvA(8)-RuvB(12)-Holliday junction (HJ) complex. HJ DNA is sandwiched between 2 RuvA tetramers; dsDNA enters through RuvA and exits via RuvB. An RuvB hexamer assembles on each DNA strand where it exits the tetramer. Each RuvB hexamer is contacted by two RuvA subunits (via domain III) on 2 adjacent RuvB subunits; this complex drives branch migration. In the full resolvosome a probable DNA-RuvA(4)-RuvB(12)-RuvC(2) complex forms which resolves the HJ.

The protein localises to the cytoplasm. The catalysed reaction is ATP + H2O = ADP + phosphate + H(+). Functionally, the RuvA-RuvB-RuvC complex processes Holliday junction (HJ) DNA during genetic recombination and DNA repair, while the RuvA-RuvB complex plays an important role in the rescue of blocked DNA replication forks via replication fork reversal (RFR). RuvA specifically binds to HJ cruciform DNA, conferring on it an open structure. The RuvB hexamer acts as an ATP-dependent pump, pulling dsDNA into and through the RuvAB complex. RuvB forms 2 homohexamers on either side of HJ DNA bound by 1 or 2 RuvA tetramers; 4 subunits per hexamer contact DNA at a time. Coordinated motions by a converter formed by DNA-disengaged RuvB subunits stimulates ATP hydrolysis and nucleotide exchange. Immobilization of the converter enables RuvB to convert the ATP-contained energy into a lever motion, pulling 2 nucleotides of DNA out of the RuvA tetramer per ATP hydrolyzed, thus driving DNA branch migration. The RuvB motors rotate together with the DNA substrate, which together with the progressing nucleotide cycle form the mechanistic basis for DNA recombination by continuous HJ branch migration. Branch migration allows RuvC to scan DNA until it finds its consensus sequence, where it cleaves and resolves cruciform DNA. This Mycoplasma pneumoniae (strain ATCC 29342 / M129 / Subtype 1) (Mycoplasmoides pneumoniae) protein is Holliday junction branch migration complex subunit RuvB.